We begin with the raw amino-acid sequence, 528 residues long: Chaperonin GroEL, chloroplastic (528 aa).

ATP-binding positions include 29–32 (TLGP), 86–90 (DGTTT), Gly-414, and Asp-496.

This sequence belongs to the chaperonin (HSP60) family. Forms a cylinder of 14 subunits composed of two heptameric rings stacked back-to-back. Interacts with the co-chaperonin GroES.

Its subcellular location is the plastid. The protein resides in the chloroplast. It catalyses the reaction ATP + H2O + a folded polypeptide = ADP + phosphate + an unfolded polypeptide.. Functionally, together with its co-chaperonin GroES, plays an essential role in assisting protein folding. The GroEL-GroES system forms a nano-cage that allows encapsulation of the non-native substrate proteins and provides a physical environment optimized to promote and accelerate protein folding. The protein is Chaperonin GroEL, chloroplastic of Porphyra purpurea (Red seaweed).